We begin with the raw amino-acid sequence, 579 residues long: MAARSWQDELAQQAEEGSARLRELLSVGLGFLRTELGLDLGLEPKRYPGWVILVGTGALGLLLLFLLGYGWAAACAGARKKRRSPPRKREEAAPPTPAPDDLAQLKNLRSEEQKKKNRKKLPEKPKPNGRTVEVPEDEVVRNPRSITAKQAPETDKKNEKSKKNKKKSKSDAKAVQNSSRHDGKEVDEGAWETKISHREKRQQRKRDKVLTDSGSLDSTIPGIENIITVTTEQLTTASFPVGSKKNKGDSHLNVQVSNFKSGKGDSTLQVSSRLNENLTVNGGGWSEKSVKLSSQLSEEKWNSVPPASAGKRKTEPSAWTQDTGDTNANGKDWGRNWSDRSIFSGIGSTAEPVSQSTTSDYQWDVSRNQPYIDDEWSGLNGLSSADPSSDWNAPAEEWGNWVDEDRASLLKSQEPISNDQKVSDDDKEKGEGALPTGKSKKKKKKKKKQGEDNSHTQDTEDLEKDTREELPVNTSKARPKQEKACSLKTMSTSDPAEVLIKNSQPVKTLPPAISAEPSITLSKGDSDNSSSQVPPMLQDTDKPKSNAKQNSVPPSQTKSETNWESPKQIKKKKKARRET.

The Lumenal segment spans residues M1–P48. The interval M1–W71 is activation of NF-kappa-B. A helical transmembrane segment spans residues G49–Y69. Topologically, residues G70–T579 are cytoplasmic. Positions A72–S168 are interaction with BCCIP. The interval A78–G222 is disordered. The interval D100–R204 is interaction with RELA. Residues L108–K126 are compositionally biased toward basic and acidic residues. Positions E159 to S168 are enriched in basic residues. A Phosphoserine modification is found at S179. The span at H197 to D207 shows a compositional bias: basic residues. S215 and S250 each carry phosphoserine. K263 bears the N6-acetyllysine mark. The tract at residues N277–T579 is disordered. A phosphoserine mark is found at S297, S303, and S308. A compositionally biased stretch (polar residues) spans S317–N329. S341 and S366 each carry phosphoserine. Polar residues-rich tracts occupy residues E351–Q369, N380–W391, and L410–Q420. A lung-homing for mammary tumors region spans residues G378–K440. Phosphoserine is present on residues S412 and S423. Over residues K421–E431 the composition is skewed to basic and acidic residues. Residues K438 to K448 show a composition bias toward basic residues. A compositionally biased stretch (basic and acidic residues) spans Q449–L470. 4 positions are modified to phosphoserine: S454, S475, S491, and S493. 2 stretches are compositionally biased toward polar residues: residues P517–V533 and N546–S565. S565 is subject to Phosphoserine. The span at Q568–T579 shows a compositional bias: basic residues.

In terms of assembly, interacts with BCCIP, CREBBP/CBP and RELA/p65. As to expression, in the mammary gland, expressed at the apical surface of epithelial cells lining ducts, as well as in the mammary fat pad. Not detected in the spleen, kidney, lung, or skin; minute amounts seen in the liver. Expressed in Purkinje neurons in the early postnatal and adult cerebellum. Overexpressed in mammary tumors (at protein level).

The protein resides in the endoplasmic reticulum membrane. The protein localises to the nucleus membrane. It is found in the cell junction. It localises to the tight junction. Its subcellular location is the nucleus. The protein resides in the nucleolus. The protein localises to the cytoplasm. It is found in the perinuclear region. Functionally, down-regulates SLC1A2/EAAT2 promoter activity when expressed ectopically. Activates the nuclear factor kappa-B (NF-kappa-B) transcription factor. Promotes anchorage-independent growth of immortalized melanocytes and astrocytes which is a key component in tumor cell expansion. Promotes lung metastasis and also has an effect on bone and brain metastasis, possibly by enhancing the seeding of tumor cells to the target organ endothelium. Induces chemoresistance. This is Protein LYRIC (Mtdh) from Mus musculus (Mouse).